The primary structure comprises 652 residues: uncharacterized protein (652 aa).

The segment covering 1–13 has biased composition (basic and acidic residues); the sequence is MSVTESKAKTERK. The disordered stretch occupies residues 1 to 21; the sequence is MSVTESKAKTERKSSRKPAKT.

This sequence belongs to the ParB family.

This is an uncharacterized protein from Escherichia coli (strain K12).